The chain runs to 190 residues: Transcription factor bHLH162 (190 aa).

The segment covering 1–12 (MEPSHSNTGQSR) has biased composition (polar residues). Positions 1–21 (MEPSHSNTGQSRSVDRKTVEK) are disordered. Positions 11–63 (SRSVDRKTVEKNRRMQMKSLYSELISLLPHHSSTEPLTLPDQLDEAANYIKKL) constitute a bHLH domain.

Belongs to the bHLH protein family.

The protein localises to the nucleus. The polypeptide is Transcription factor bHLH162 (Arabidopsis thaliana (Mouse-ear cress)).